The following is a 201-amino-acid chain: TATA-box-binding protein 2 (201 aa).

Tandem repeats lie at residues 26–102 (LQNI…ARII) and 116–193 (IQNI…YPVL).

It belongs to the TBP family. Belongs to the TFIID complex together with the TBP-associated factors (TAFs). Binds DNA as monomer.

It localises to the nucleus. Its function is as follows. General transcription factor that functions at the core of the DNA-binding multiprotein factor TFIID. Binding of TFIID to the TATA box is the initial transcriptional step of the pre-initiation complex (PIC), playing a role in the activation of eukaryotic genes transcribed by RNA polymerase II. The sequence is that of TATA-box-binding protein 2 (TBP2) from Triticum aestivum (Wheat).